The sequence spans 258 residues: Phosphate import ATP-binding protein PstB 3 (258 aa).

The region spanning 10 to 253 is the ABC transporter domain; the sequence is MTARSLAVHY…PANSLTQGYI (244 aa). 42–49 serves as a coordination point for ATP; it reads GPSGCGKS.

Belongs to the ABC transporter superfamily. Phosphate importer (TC 3.A.1.7) family. As to quaternary structure, the complex is composed of two ATP-binding proteins (PstB), two transmembrane proteins (PstC and PstA) and a solute-binding protein (PstS).

It localises to the cell inner membrane. It catalyses the reaction phosphate(out) + ATP + H2O = ADP + 2 phosphate(in) + H(+). Functionally, part of the ABC transporter complex PstSACB involved in phosphate import. Responsible for energy coupling to the transport system. This is Phosphate import ATP-binding protein PstB 3 from Paramagnetospirillum magneticum (strain ATCC 700264 / AMB-1) (Magnetospirillum magneticum).